We begin with the raw amino-acid sequence, 171 residues long: 3-hydroxydecanoyl-[acyl-carrier-protein] dehydratase (171 aa).

The active site involves H70.

Belongs to the thioester dehydratase family. FabA subfamily. In terms of assembly, homodimer.

The protein resides in the cytoplasm. The enzyme catalyses a (3R)-hydroxyacyl-[ACP] = a (2E)-enoyl-[ACP] + H2O. The catalysed reaction is (3R)-hydroxydecanoyl-[ACP] = (2E)-decenoyl-[ACP] + H2O. It carries out the reaction (2E)-decenoyl-[ACP] = (3Z)-decenoyl-[ACP]. The protein operates within lipid metabolism; fatty acid biosynthesis. Functionally, necessary for the introduction of cis unsaturation into fatty acids. Catalyzes the dehydration of (3R)-3-hydroxydecanoyl-ACP to E-(2)-decenoyl-ACP and then its isomerization to Z-(3)-decenoyl-ACP. Can catalyze the dehydratase reaction for beta-hydroxyacyl-ACPs with saturated chain lengths up to 16:0, being most active on intermediate chain length. In Shewanella baltica (strain OS223), this protein is 3-hydroxydecanoyl-[acyl-carrier-protein] dehydratase.